We begin with the raw amino-acid sequence, 312 residues long: Urease accessory protein UreD (312 aa).

The span at 1–15 shows a compositional bias: basic and acidic residues; sequence MLAEQFTDKNKHAEQ. Positions 1 to 24 are disordered; the sequence is MLAEQFTDKNKHAEQELSPGSSAV.

Belongs to the UreD family. As to quaternary structure, ureD, UreF and UreG form a complex that acts as a GTP-hydrolysis-dependent molecular chaperone, activating the urease apoprotein by helping to assemble the nickel containing metallocenter of UreC. The UreE protein probably delivers the nickel.

The protein resides in the cytoplasm. Its function is as follows. Required for maturation of urease via the functional incorporation of the urease nickel metallocenter. The protein is Urease accessory protein UreD of Hahella chejuensis (strain KCTC 2396).